The chain runs to 262 residues: MQTIIRVEKLAKTFNQHQALHAVDLNIHHGEMVALLGPSGSGKSTLLRHLSGLIVGDKKPECRVELLGCTVQQNGRLARDIRKSRANTGYIFQQFNLVNRLSVLENVLIGALGSTPFWRTCFSWFTREQKQRALQALTRVGMVHFAHQRVSTLSGGQQQRVAIARALMQQAKVILADEPIASLDPESARIVMDTLRDINQNDGITVVVTLHQVDYALRYCERIVALRQGHVFYDGSSQLFDNDRFDHLYRSINRVEENAKAA.

An ABC transporter domain is found at 5-253 (IRVEKLAKTF…RFDHLYRSIN (249 aa)). 37–44 (GPSGSGKS) contributes to the ATP binding site.

It belongs to the ABC transporter superfamily. Phosphonates importer (TC 3.A.1.9.1) family. The complex is composed of two ATP-binding proteins (PhnC), two transmembrane proteins (PhnE) and a solute-binding protein (PhnD).

Its subcellular location is the cell inner membrane. It carries out the reaction phosphonate(out) + ATP + H2O = phosphonate(in) + ADP + phosphate + H(+). Part of the ABC transporter complex PhnCDE involved in phosphonates import. Responsible for energy coupling to the transport system. The sequence is that of Phosphonates import ATP-binding protein PhnC from Shigella dysenteriae serotype 1 (strain Sd197).